We begin with the raw amino-acid sequence, 431 residues long: tRNA-specific 2-thiouridylase MnmA (431 aa).

Residues 35–42 (AMSGGVDS) and Leu-61 each bind ATP. Cys-129 acts as the Nucleophile in catalysis. Cys-129 and Cys-226 form a disulfide bridge. Gly-153 contributes to the ATP binding site. Residues 176–178 (RDQ) are interaction with tRNA. The active-site Cysteine persulfide intermediate is Cys-226. The segment at 407–431 (PKPPNEDLLDTNESSDLVSPKRSAC) is disordered.

It belongs to the MnmA/TRMU family.

Its subcellular location is the cytoplasm. It carries out the reaction S-sulfanyl-L-cysteinyl-[protein] + uridine(34) in tRNA + AH2 + ATP = 2-thiouridine(34) in tRNA + L-cysteinyl-[protein] + A + AMP + diphosphate + H(+). Functionally, catalyzes the 2-thiolation of uridine at the wobble position (U34) of tRNA, leading to the formation of s(2)U34. The protein is tRNA-specific 2-thiouridylase MnmA of Beijerinckia indica subsp. indica (strain ATCC 9039 / DSM 1715 / NCIMB 8712).